A 33-amino-acid chain; its full sequence is Cytochrome b6-f complex subunit 8 (33 aa).

The helical transmembrane segment at 2–22 (LFTVAWASLAAMFSFSIAMVV) threads the bilayer.

Belongs to the PetN family. The 4 large subunits of the cytochrome b6-f complex are cytochrome b6, subunit IV (17 kDa polypeptide, PetD), cytochrome f and the Rieske protein, while the 4 small subunits are PetG, PetL, PetM and PetN. The complex functions as a dimer.

It is found in the cellular thylakoid membrane. In terms of biological role, component of the cytochrome b6-f complex, which mediates electron transfer between photosystem II (PSII) and photosystem I (PSI), cyclic electron flow around PSI, and state transitions. The chain is Cytochrome b6-f complex subunit 8 from Parasynechococcus marenigrum (strain WH8102).